A 483-amino-acid polypeptide reads, in one-letter code: MGNKKALKEEAFLGSAEEGADFDQAMFPVMETFEINDPMPKKRNWGSFCTAVMAIHLILLTAGTTLLTLKVLSLQKWILEKYLDNETLAAEDRSFFSLQLASPETHLVPRTPGLQALQVQLTQVRTSQEQLLQQVDNLTRNPELFRIKGERGSPGIPGLQGPPGIKGEAGLQGPMGAPREPGATGAPGPQGEKGSKGDKGLIGPKGEHGTKGDKGDLGLPGSKGDMGMKGVTGVMGPPGAQGNKGDPGKPGLPGLAGSPGVKGDQGQPGLQGVPGTPGAAGPSGAKGEPGHPGPPGPTGPQGISGSPGAAGLKGSKGDTGIQGQKGTKGESGVPGLAGRKGDTGNPGLAGPKGEPGRPGLKGDPGMKGSSGQQGQKGEKGEKGQSFKEVRIVGGTNRGRAEIFYNNAWGTICDDNWDNNDATVFCRMLGYSSGKGFTFGGGSGNIWLDDVNCQGTEDSLWNCRKNNWGSHNCNHNEDAGVECR.

The Cytoplasmic segment spans residues 1–48 (MGNKKALKEEAFLGSAEEGADFDQAMFPVMETFEINDPMPKKRNWGSF). The chain crosses the membrane as a helical; Signal-anchor for type II membrane protein span at residues 49–69 (CTAVMAIHLILLTAGTTLLTL). At 70 to 483 (KVLSLQKWIL…HNEDAGVECR (414 aa)) the chain is on the extracellular side. N-linked (GlcNAc...) asparagine glycans are attached at residues N85 and N137. Positions 146-386 (RIKGERGSPG…GEKGEKGQSF (241 aa)) are disordered. The Collagen-like domain maps to 148-383 (KGERGSPGIP…GQKGEKGEKG (236 aa)). Over residues 153–166 (SPGIPGLQGPPGIK) the composition is skewed to low complexity. Basic and acidic residues predominate over residues 193-216 (KGSKGDKGLIGPKGEHGTKGDKGD). The span at 273-286 (VPGTPGAAGPSGAK) shows a compositional bias: low complexity. The span at 376–386 (KGEKGEKGQSF) shows a compositional bias: basic and acidic residues. Residues 389–483 (VRIVGGTNRG…HNEDAGVECR (95 aa)) form the SRCR domain. 3 cysteine pairs are disulfide-bonded: C412–C472, C425–C482, and C452–C462.

Homotrimer; disulfide-linked. Trimers may assemble in larger oligomers thus resulting in the creation of a large surface capable of interacting with very large ligands. In terms of processing, N-glycosylated. In terms of tissue distribution, expressed in alveolar macrophages, macrophages of lymph node sinues, and Kupffer cells in liver (at protein level).

Its subcellular location is the cell membrane. Its function is as follows. Pattern recognition receptor (PRR) which binds Gram-positive and Gram-negative bacteria. Also plays a role in binding of unopsonized particles by alveolar macrophages. Binds to the secretoglobin SCGB3A2. This is Macrophage receptor MARCO (MARCO) from Mesocricetus auratus (Golden hamster).